The chain runs to 641 residues: 1-deoxy-D-xylulose-5-phosphate synthase (641 aa).

Thiamine diphosphate-binding positions include histidine 79 and 120–122 (GHS). Aspartate 151 contacts Mg(2+). Thiamine diphosphate contacts are provided by residues 152-153 (GS), asparagine 180, tyrosine 291, and glutamate 375. Asparagine 180 serves as a coordination point for Mg(2+).

This sequence belongs to the transketolase family. DXPS subfamily. Homodimer. Mg(2+) serves as cofactor. The cofactor is thiamine diphosphate.

The catalysed reaction is D-glyceraldehyde 3-phosphate + pyruvate + H(+) = 1-deoxy-D-xylulose 5-phosphate + CO2. It participates in metabolic intermediate biosynthesis; 1-deoxy-D-xylulose 5-phosphate biosynthesis; 1-deoxy-D-xylulose 5-phosphate from D-glyceraldehyde 3-phosphate and pyruvate: step 1/1. In terms of biological role, catalyzes the acyloin condensation reaction between C atoms 2 and 3 of pyruvate and glyceraldehyde 3-phosphate to yield 1-deoxy-D-xylulose-5-phosphate (DXP). This is 1-deoxy-D-xylulose-5-phosphate synthase from Nitratidesulfovibrio vulgaris (strain ATCC 29579 / DSM 644 / CCUG 34227 / NCIMB 8303 / VKM B-1760 / Hildenborough) (Desulfovibrio vulgaris).